The chain runs to 150 residues: 3-dehydroquinate dehydratase (150 aa).

The active-site Proton acceptor is the Tyr-23. Residues Asn-79, His-85, and Asp-92 each contribute to the substrate site. His-105 (proton donor) is an active-site residue. Substrate is bound by residues Ile-106 to Ser-107 and Arg-116.

This sequence belongs to the type-II 3-dehydroquinase family. As to quaternary structure, homododecamer.

It catalyses the reaction 3-dehydroquinate = 3-dehydroshikimate + H2O. It participates in metabolic intermediate biosynthesis; chorismate biosynthesis; chorismate from D-erythrose 4-phosphate and phosphoenolpyruvate: step 3/7. Functionally, catalyzes a trans-dehydration via an enolate intermediate. The chain is 3-dehydroquinate dehydratase from Marinomonas sp. (strain MWYL1).